The following is a 301-amino-acid chain: Cytochrome c biogenesis protein CcsA (301 aa).

8 consecutive transmembrane segments (helical) span residues 13-33, 39-59, 73-93, 97-117, 146-166, 209-229, 236-256, and 270-290; these read NNIT…GLIF, VFYI…IILG, LYES…YLEY, LYLI…FSTL, MLSY…LVLI, TIGF…VWAN, WSWD…AAYL, and AYLA…VNFL.

This sequence belongs to the CcmF/CycK/Ccl1/NrfE/CcsA family. As to quaternary structure, may interact with Ccs1.

It is found in the plastid. The protein resides in the chloroplast thylakoid membrane. Functionally, required during biogenesis of c-type cytochromes (cytochrome c6 and cytochrome f) at the step of heme attachment. This chain is Cytochrome c biogenesis protein CcsA, found in Guillardia theta (Cryptophyte).